The chain runs to 259 residues: 14-3-3-like protein (259 aa).

Positions D237–Q259 are disordered. A compositionally biased stretch (basic and acidic residues) spans R247–Q259.

The protein belongs to the 14-3-3 family. As to expression, leaves specific.

This Solanum tuberosum (Potato) protein is 14-3-3-like protein.